The primary structure comprises 143 residues: Transcriptional regulator MraZ (143 aa).

SpoVT-AbrB domains lie at 5–47 and 76–119; these read THSP…TTRE and ANAE…DAGT.

It belongs to the MraZ family. As to quaternary structure, forms oligomers.

The protein resides in the cytoplasm. It localises to the nucleoid. The chain is Transcriptional regulator MraZ from Clavibacter michiganensis subsp. michiganensis (strain NCPPB 382).